Here is a 1067-residue protein sequence, read N- to C-terminus: Protein bric-a-brac 2 (1067 aa).

The segment at Met-30–Val-121 is disordered. 2 stretches are compositionally biased toward basic and acidic residues: residues His-47–Glu-62 and Lys-86–Lys-98. The residue at position 55 (Tyr-55) is a Phosphotyrosine. Ser-56, Ser-87, and Ser-147 each carry phosphoserine. Residues Val-223–Gln-288 enclose the BTB domain. Disordered stretches follow at residues Gly-312–Pro-412, Ala-444–His-505, and Gly-525–Asp-563. Acidic residues predominate over residues Phe-326–Leu-335. At Ser-377 the chain carries Phosphoserine. Thr-384 carries the post-translational modification Phosphothreonine. Residues Gly-391 to Pro-412 are compositionally biased toward low complexity. Gly residues-rich tracts occupy residues Gly-525 to Ser-538 and Gly-545 to Ala-556. The HTH psq-type domain occupies Phe-635–Met-687. Residues Arg-645–Pro-690 constitute a DNA-binding region (H-T-H motif). Positions Asp-697–Arg-708 form a DNA-binding region, a.T hook. 3 disordered regions span residues Gln-796–Gln-829, Ala-860–Ser-879, and Val-891–Ala-967. Positions Ala-812–Gln-829 are enriched in low complexity. Low complexity predominate over residues Ala-904 to Arg-914. The span at Glu-915–Ser-933 shows a compositional bias: basic and acidic residues. A compositionally biased stretch (low complexity) spans Arg-934 to Ser-949.

In terms of tissue distribution, leg imaginal disk at the central region of the tarsus and in eye antenna disk at the basal cylinder.

Its subcellular location is the nucleus. Its function is as follows. Probably acts as a transcriptional regulator. Required for the specification of the tarsal segment. Also involved in antenna development. This is Protein bric-a-brac 2 (bab2) from Drosophila melanogaster (Fruit fly).